Reading from the N-terminus, the 731-residue chain is MSGVMTAVSNRWDPGVIRALAEARHGDAFAVLGAHRTDTGRVLRTYLPGAERVSAVLDDGQTIALEAGPEPGLFAGDLPAQGGYRLRIGWPGGEQDTADPYAFGPQLSDFDLHLISEGHHLQLADALGANVVEVDGVRGTRFAVWAPNASRVAVVGDFNSWDARRHPMRLRHQSGVWELFVPDVGPGAHYKYQLRGPHGHELPAKADPVARRAELAPGTASIVADPTPYQWSDDGWMATRARRQAHDAPMSVYEMHAGSWLREEGVDLDWDGLADRLIPYVADMGFTHVELMPVTEHPFGGSWGYQPLGLFAPTARFGTPDGFARFVDRCHREGIGVIVDWVPAHFPTDAHGLAHFDGTALYEHADPREGFHRDWNTLIYNHGRREVSGFLIASAMEFLQRYHVDGLRVDAVASMLYRDYSRNAGEWVPNIHGGRENYETIAFLRRLNALVREHTPGAVMIAEESTAFPGVTADVAHGGLGFHYKWNMGWMHDTLHYAGLDPIYRRYHHGELTFSMVYAYSERFVLPISHDEVVHGKGSLLGRMPGDDWQRFANLRAYLGFMFTHPGRKLLFMGCEFGQPTEWNHDSGLPWHLLDDPRHRGVQTLVRDVNRLYVQYPALHAHDDDPSGFAWVVGDDAGNSVVAFLRKGKRGDAPVLVVINFTPVVQHGYRIGVPQGGQWREVFNSDAGIYGGANLGNGGIVTAEQQSMHGHAHALPLLLPPLGAIVLTPPG.

Catalysis depends on Asp410, which acts as the Nucleophile. Residue Glu463 is the Proton donor of the active site.

It belongs to the glycosyl hydrolase 13 family. GlgB subfamily. Monomer.

It carries out the reaction Transfers a segment of a (1-&gt;4)-alpha-D-glucan chain to a primary hydroxy group in a similar glucan chain.. Its pathway is glycan biosynthesis; glycogen biosynthesis. In terms of biological role, catalyzes the formation of the alpha-1,6-glucosidic linkages in glycogen by scission of a 1,4-alpha-linked oligosaccharide from growing alpha-1,4-glucan chains and the subsequent attachment of the oligosaccharide to the alpha-1,6 position. This chain is 1,4-alpha-glucan branching enzyme GlgB 2, found in Xanthomonas oryzae pv. oryzae (strain MAFF 311018).